Reading from the N-terminus, the 174-residue chain is MPQIQSSHSNHFDFTIDTADRTKLLMSYLVVPTTANFNNVMHGGELLNLLDKVAYVCSTRYCAKGTVTLSVDGVTFKYPIPVGNLLTFLASINYVGNTSCEVGIKVLSEDIKTREITHTNSCYFTMVAVENGKPTPMPKYEPKTEVEIRRYEGALKRKEMRTRGYLKSGKHEGV.

Residues 20 to 132 enclose the HotDog ACOT-type domain; that stretch reads DRTKLLMSYL…YFTMVAVENG (113 aa).

Belongs to the acyl coenzyme A hydrolase family.

The chain is Protein VdlD (vdlD) from Helicobacter pylori (strain J99 / ATCC 700824) (Campylobacter pylori J99).